Reading from the N-terminus, the 403-residue chain is Imidazolonepropionase (403 aa).

Fe(3+) is bound by residues H68 and H70. Zn(2+)-binding residues include H68 and H70. 4-imidazolone-5-propanoate is bound by residues R77, Y140, and H173. Y140 is a binding site for N-formimidoyl-L-glutamate. Fe(3+) is bound at residue H238. H238 contributes to the Zn(2+) binding site. Residue Q241 participates in 4-imidazolone-5-propanoate binding. Fe(3+) is bound at residue D313. D313 is a binding site for Zn(2+). Positions 315 and 317 each coordinate N-formimidoyl-L-glutamate. Position 318 (T318) interacts with 4-imidazolone-5-propanoate.

It belongs to the metallo-dependent hydrolases superfamily. HutI family. The cofactor is Zn(2+). Fe(3+) serves as cofactor.

Its subcellular location is the cytoplasm. It catalyses the reaction 4-imidazolone-5-propanoate + H2O = N-formimidoyl-L-glutamate. Its pathway is amino-acid degradation; L-histidine degradation into L-glutamate; N-formimidoyl-L-glutamate from L-histidine: step 3/3. In terms of biological role, catalyzes the hydrolytic cleavage of the carbon-nitrogen bond in imidazolone-5-propanoate to yield N-formimidoyl-L-glutamate. It is the third step in the universal histidine degradation pathway. The chain is Imidazolonepropionase from Psychromonas ingrahamii (strain DSM 17664 / CCUG 51855 / 37).